The following is a 321-amino-acid chain: Protease HtpX homolog (321 aa).

2 helical membrane-spanning segments follow: residues 6-26 (TAML…LIGG) and 28-48 (GGMM…YWNS). His130 lines the Zn(2+) pocket. Residue Glu131 is part of the active site. A Zn(2+)-binding site is contributed by His134. The next 2 helical transmembrane spans lie at 145 to 165 (ITAT…FFGG) and 173 to 193 (PLGF…AMLV). Residue Glu202 coordinates Zn(2+). The tract at residues 281–321 (EFSPRASTPPPSGDRPVRKSGSVPTTGWRRGNENERKGPWS) is disordered. The segment covering 310–321 (RGNENERKGPWS) has biased composition (basic and acidic residues).

It belongs to the peptidase M48B family. The cofactor is Zn(2+).

Its subcellular location is the cell inner membrane. This Agrobacterium fabrum (strain C58 / ATCC 33970) (Agrobacterium tumefaciens (strain C58)) protein is Protease HtpX homolog.